A 438-amino-acid chain; its full sequence is UDP-N-acetylmuramoylalanine--D-glutamate ligase (438 aa).

Residue 112–118 (GSNGKST) coordinates ATP.

It belongs to the MurCDEF family.

It localises to the cytoplasm. It carries out the reaction UDP-N-acetyl-alpha-D-muramoyl-L-alanine + D-glutamate + ATP = UDP-N-acetyl-alpha-D-muramoyl-L-alanyl-D-glutamate + ADP + phosphate + H(+). It functions in the pathway cell wall biogenesis; peptidoglycan biosynthesis. Functionally, cell wall formation. Catalyzes the addition of glutamate to the nucleotide precursor UDP-N-acetylmuramoyl-L-alanine (UMA). The chain is UDP-N-acetylmuramoylalanine--D-glutamate ligase (murD) from Escherichia coli O6:H1 (strain CFT073 / ATCC 700928 / UPEC).